The chain runs to 370 residues: Glutamate 5-kinase (370 aa).

Residue Lys-11 participates in ATP binding. Substrate is bound by residues Ser-52, Asp-139, and Asn-151. ATP-binding positions include 171–172 (TD) and 213–219 (TGGMATK). The PUA domain occupies 278-356 (TGKLLLDAGA…DQIVQILGYE (79 aa)).

It belongs to the glutamate 5-kinase family.

Its subcellular location is the cytoplasm. The enzyme catalyses L-glutamate + ATP = L-glutamyl 5-phosphate + ADP. Its pathway is amino-acid biosynthesis; L-proline biosynthesis; L-glutamate 5-semialdehyde from L-glutamate: step 1/2. Functionally, catalyzes the transfer of a phosphate group to glutamate to form L-glutamate 5-phosphate. The sequence is that of Glutamate 5-kinase from Synechococcus sp. (strain ATCC 27144 / PCC 6301 / SAUG 1402/1) (Anacystis nidulans).